We begin with the raw amino-acid sequence, 568 residues long: Sphingosine-1-phosphate lyase 1 (568 aa).

Residues 1 to 40 (MPSTDLLMLKAFEPYLEILEVYSTKAKNYVNGHCTKYEPW) are Lumenal-facing. The helical; Signal-anchor for type III membrane protein transmembrane segment at 41–61 (QLIAWSVVWTLLIVWGYEFVF) threads the bilayer. The Cytoplasmic segment spans residues 62-568 (QPESLWSRFK…SQMNGSPKPH (507 aa)). An N6-(pyridoxal phosphate)lysine; alternate modification is found at Lys-353. N6-acetyllysine; alternate is present on Lys-353. Residues Tyr-356 and Tyr-366 each carry the 3'-nitrotyrosine modification. Ser-564 carries the post-translational modification Phosphoserine.

It belongs to the group II decarboxylase family. Sphingosine-1-phosphate lyase subfamily. Homodimer. It depends on pyridoxal 5'-phosphate as a cofactor. In terms of tissue distribution, ubiquitously expressed. Expressed in fetal and adult adrenal gland (at protein level).

It localises to the endoplasmic reticulum membrane. It catalyses the reaction sphinganine 1-phosphate = hexadecanal + phosphoethanolamine. The enzyme catalyses sphing-4-enine 1-phosphate = (2E)-hexadecenal + phosphoethanolamine. The protein operates within lipid metabolism; sphingolipid metabolism. Cleaves phosphorylated sphingoid bases (PSBs), such as sphingosine-1-phosphate, into fatty aldehydes and phosphoethanolamine. Elevates stress-induced ceramide production and apoptosis. Required for global lipid homeostasis in liver and cholesterol homeostasis in fibroblasts. Involved in the regulation of pro-inflammatory response and neutrophil trafficking. Modulates neuronal autophagy via phosphoethanolamine production which regulates accumulation of aggregate-prone proteins such as APP. Seems to play a role in establishing neuronal contact sites and axonal maintenance. The protein is Sphingosine-1-phosphate lyase 1 of Homo sapiens (Human).